Consider the following 305-residue polypeptide: Glycine betaine-binding protein YehZ (305 aa).

The N-terminal stretch at 1-23 (MPLLKLWAGSLVMLAAVSLPLQA) is a signal peptide.

This sequence belongs to the OsmX family. The complex is composed of two ATP-binding proteins (YehX), two transmembrane proteins (YehW and YehY) and a solute-binding protein (YehZ).

The protein resides in the periplasm. Its function is as follows. Part of an ABC transporter complex involved in low-affinity glycine betaine uptake. Binds glycine betaine with low affinity. This chain is Glycine betaine-binding protein YehZ (yehZ), found in Escherichia coli (strain K12).